Here is a 294-residue protein sequence, read N- to C-terminus: Type 4 apparatus protein DotZ (294 aa).

As to quaternary structure, the T4BSS is a complex nanomachine composed of several subcomplexes. This subunit is part of the Type IV Coupling Complex (T4CC), a subcomplex composed of the DotLMNYZ core and the IcmSW-LvgA adapter subunits, linked by the C-terminal tail of DotL. Six DotLMNYZ hetero-pentameric units may assemble into a hexameric nanomachine, forming an inner membrane channel for effectors to pass through. Makes significant contact with DotN and DotY, but engages weakly with DotM and DotL. DotY and DotZ are co-dependent for the assembly into the T4CC.

Its subcellular location is the cytoplasm. Component of the Dot/Icm type IVB secretion system (T4BSS), which is used to inject bacterial effector proteins into eukaryotic host cells. Part of a subcomplex which recruits effector proteins and delivers them to the core transmembrane subcomplex. DotY and DotZ play a role in effector translocation, but are not essential and do not influence the stability of the subcomplex main components. The DotY/DotZ main function is to optimize secretion by modulating the delivery trajectory of the IcmSW module and the localization of the machinery to the poles. The protein is Type 4 apparatus protein DotZ of Legionella pneumophila subsp. pneumophila (strain Philadelphia 1 / ATCC 33152 / DSM 7513).